The primary structure comprises 903 residues: Glutamate receptor ionotropic, NMDA 1 (903 aa).

The N-terminal stretch at 1 to 20 (MGTMRLFLLAVLFLFSFARA) is a signal peptide. The Extracellular portion of the chain corresponds to 21 to 557 (GCDPKIVNIG…TLDSFMQPFQ (537 aa)). 9 N-linked (GlcNAc...) asparagine glycosylation sites follow: Asn-61, Asn-203, Asn-276, Asn-300, Asn-350, Asn-368, Asn-440, Asn-469, and Asn-489. Cys-79 and Cys-308 form a disulfide bridge. 2 disulfide bridges follow: Cys-420–Cys-452 and Cys-436–Cys-453. Residues Pro-514, Thr-516, and Arg-521 each contribute to the glycine site. The chain crosses the membrane as a helical span at residues 558–578 (STLWLLVGLSVHVVAVMLYLL). Topologically, residues 579 to 600 (DRFSPFGRFKVNSEEEEEDALT) are cytoplasmic. A pore-forming region spans residues 601-620 (LSSAMWFSWGVLLNSGIGEG). Residues 601–622 (LSSAMWFSWGVLLNSGIGEGAP) constitute an intramembrane region (discontinuously helical). Residues 623-628 (RSFSAR) are Cytoplasmic-facing. The helical transmembrane segment at 629–645 (ILGMVWAGFAMIIVASY) threads the bilayer. Over 646-810 (TANLAAFLVL…NAPATLTFEN (165 aa)) the chain is Extracellular. Ser-686 and Asp-730 together coordinate glycine. Residues Cys-742 and Cys-796 are joined by a disulfide bond. Asn-769 carries N-linked (GlcNAc...) asparagine glycosylation. The helical transmembrane segment at 811 to 831 (MAGVFMLVAGGIVAGIFLIFI) threads the bilayer. The Cytoplasmic portion of the chain corresponds to 832–903 (EIAYKRHKDA…SSKDTVNVVV (72 aa)).

Belongs to the glutamate-gated ion channel (TC 1.A.10.1) family. NR1/GRIN1 subfamily. Heterotetramer; the NMDAR subunits are modular and harbor tiered domains that function in concert to regulate opening and closing of the cation-selective ion channel pore. Forms heterotetrameric channels composed of two GluN1/zeta subunits (GRIN1), and two identical GluN2/epsilon subunits (GRIN2A, GRIN2B, GRIN2C or GRIN2D) or GluN3 subunits (GRIN3A or GRIN3B) (in vitro). Does not form functional channels by itself. Can also form heterotetrameric channels that contain at least two GluN1 subunits and at least two different GluN2 subunits (or a combination of one GluN2 and one GluN3 subunits) (in vitro). In vivo, the subunit composition may vary in function of the expression levels of the different subunits.

The protein localises to the cell membrane. It is found in the postsynaptic cell membrane. Its subcellular location is the postsynaptic density membrane. The protein resides in the synaptic cell membrane. It carries out the reaction Ca(2+)(in) = Ca(2+)(out). The enzyme catalyses Na(+)(in) = Na(+)(out). It catalyses the reaction K(+)(in) = K(+)(out). Its activity is regulated as follows. NMDA glutamate receptor activity is modulated by zinc ions. The NMDA glutamate receptor activity of the heterotetramer with grin2b is stimulated by micromolar levels of Zn(2+). The NMDA glutamate receptor activity of the heterotetramer with grin2a is inhibited by nanomolar levels of Zn(2+). Its function is as follows. Component of N-methyl-D-aspartate (NMDA) receptors (NMDARs) that function as heterotetrameric, ligand-gated cation channels with high calcium permeability and voltage-dependent block by Mg(2+). NMDARs participate in synaptic plasticity. Channel activation requires binding of the neurotransmitter L-glutamate to the GluN2 subunit, glycine binding to the GluN1 subunit, plus membrane depolarization to eliminate channel inhibition by Mg(2+). NMDARs mediate simultaneously the potasium efflux and the influx of calcium and sodium. Each GluN2 or GluN3 subunit confers differential attributes to channel properties, including activation, deactivation and desensitization kinetics, pH sensitivity, Ca2(+) permeability, and binding to allosteric modulators. The sequence is that of Glutamate receptor ionotropic, NMDA 1 from Xenopus laevis (African clawed frog).